Here is a 218-residue protein sequence, read N- to C-terminus: Glutathione S-transferase Mu 2 (218 aa).

Residues proline 2–glycine 88 form the GST N-terminal domain. Tyrosine 7–tryptophan 8 lines the glutathione pocket. 2 positions are modified to phosphoserine: serine 27 and serine 44. Glutathione-binding positions include arginine 43–tryptophan 46, lysine 50, asparagine 59–leucine 60, and glutamine 72–serine 73. Residues serine 90–valine 208 form the GST C-terminal domain. Position 116 (tyrosine 116) interacts with substrate.

It belongs to the GST superfamily. Mu family. In terms of assembly, homodimer. Muscle.

Its subcellular location is the cytoplasm. The catalysed reaction is RX + glutathione = an S-substituted glutathione + a halide anion + H(+). It catalyses the reaction 11(S)-hydroxy-14(S),15(S)-epoxy-(5Z,8Z,12E)-eicosatrienoate + glutathione = (11S,15S)-dihydroxy-14(R)-S-glutathionyl-(5Z,8Z,12E)-eicosatrienoate. Conjugation of reduced glutathione to a wide number of exogenous and endogenous hydrophobic electrophiles. Participates in the formation of novel hepoxilin regioisomers. In Homo sapiens (Human), this protein is Glutathione S-transferase Mu 2.